A 300-amino-acid polypeptide reads, in one-letter code: Protoheme IX farnesyltransferase (300 aa).

The next 9 membrane-spanning stretches (helical) occupy residues 24–44 (GLAI…IHEF), 46–66 (LETI…VGAS), 99–119 (AFTI…MINP), 122–142 (AMFG…LKTV), 145–165 (LSVF…WVAA), 176–196 (LFLI…WFLF), 220–240 (IVLY…GYTG), 244–264 (LTPV…VYAI), and 275–295 (AKTL…VYIL).

This sequence belongs to the UbiA prenyltransferase family. Protoheme IX farnesyltransferase subfamily.

It localises to the cell inner membrane. It carries out the reaction heme b + (2E,6E)-farnesyl diphosphate + H2O = Fe(II)-heme o + diphosphate. It functions in the pathway porphyrin-containing compound metabolism; heme O biosynthesis; heme O from protoheme: step 1/1. Converts heme B (protoheme IX) to heme O by substitution of the vinyl group on carbon 2 of heme B porphyrin ring with a hydroxyethyl farnesyl side group. This chain is Protoheme IX farnesyltransferase, found in Flavobacterium psychrophilum (strain ATCC 49511 / DSM 21280 / CIP 103535 / JIP02/86).